We begin with the raw amino-acid sequence, 2624 residues long: Highly reducing polyketide synthase ALT1 (2624 aa).

The 422-residue stretch at 28–449 (VLPLAIVGMG…GSNAHCILES (422 aa)) folds into the Ketosynthase family 3 (KS3) domain. Catalysis depends on Cys-200, which acts as the For beta-ketoacyl synthase activity. Positions 289–308 (VRGTSSNSDGKTPGMSMPSS) are disordered. Residues His-335 and His-372 each act as for beta-ketoacyl synthase activity in the active site. Positions 523 to 544 (ESYSNHHTLTETTNPSNNTATN) are enriched in polar residues. The tract at residues 523-545 (ESYSNHHTLTETTNPSNNTATNG) is disordered. A malonyl-CoA:ACP transacylase (MAT) domain region spans residues 639-945 (VFTGQGAQWA…GYTPAMIRGK (307 aa)). The interval 1009-1140 (HELLGSQTLE…GQVRPGRDAH (132 aa)) is N-terminal hotdog fold. A dehydratase (DH) domain region spans residues 1009-1301 (HELLGSQTLE…LEGGKFSPIE (293 aa)). The 298-residue stretch at 1009 to 1306 (HELLGSQTLE…FSPIEVDDGI (298 aa)) folds into the PKS/mFAS DH domain. His-1041 serves as the catalytic Proton acceptor; for dehydratase activity. Positions 1157–1306 (QYPRPVDSLY…FSPIEVDDGI (150 aa)) are C-terminal hotdog fold. The active-site Proton donor; for dehydratase activity is Asp-1217. A methyltransferase (CMet) domain region spans residues 1493 to 1599 (LEIGAGTGGA…RKLLAPEGYL (107 aa)). The interval 1895–2205 (GLLQTLKWVD…KGTHLGKIVV (311 aa)) is enoyl reductase (ER) (ER) domain. Residues 2230–2509 (TYVLVGGLGG…DSDALRFFIT (280 aa)) are ketoreductase (KR) domain. The 79-residue stretch at 2522-2600 (ASLDLVTRTI…GLAKLILDAL (79 aa)) folds into the Carrier domain. Position 2559 is an O-(pantetheine 4'-phosphoryl)serine (Ser-2559).

It participates in mycotoxin biosynthesis. Functionally, highly reducing polyketide synthase; part of the gene cluster that mediates the biosynthesis of the host-selective toxins (HSTs) AAL-toxins, sphinganine-analog mycotoxins responsible for Alternaria stem canker on tomato by the tomato pathotype. The biosynthesis starts with the polyketide synthase ALT1-catalyzed C-16 carbon chain assembly from one starter acetyl-CoA unit with malonyl-CoA extender units. ALT1 also selectively transfers methyl groups at the first and the third cycle of chain elongation for AAL toxin. The C-16 polyketide chain is released from the enzyme by a nucleophilic attack of a carbanion, which is derived from R-carbon of glycin by decarboxylation, on the carbonyl carbon of polyketide acyl chain. This step is probably catalyzed by a pyridoxal 5'-phosphate-dependent aminoacyl transferase ALT4. The respective functions of the other enzymes encoded by the cluster have still to be elucidated. The sphingosine N-acyltransferase-like protein ALT7 seems not to act as a resistance/self-tolerance factor against the toxin in the toxin biosynthetic gene cluster, contrary to what is expected. The polypeptide is Highly reducing polyketide synthase ALT1 (Alternaria alternata (Alternaria rot fungus)).